The primary structure comprises 388 residues: Chaperone protein DnaJ (388 aa).

A J domain is found at 4–69 (DYYDILGVDE…EKRQRYDQFG (66 aa)). 3 stretches are compositionally biased toward basic and acidic residues: residues 27 to 50 (KAME…KEAS), 58 to 73 (DPEK…HDGV), and 113 to 124 (GRSERGRGRPGS). Disordered stretches follow at residues 27-86 (KAME…GRGR) and 99-125 (SDIF…PGSD). The segment at 140–225 (GTEKNLRLQK…CGGEGRVQGE (86 aa)) adopts a CR-type zinc-finger fold. Positions 153, 156, 173, 176, 199, 202, 213, and 216 each coordinate Zn(2+). CXXCXGXG motif repeat units follow at residues 153–160 (CESCDGTG), 173–180 (CPKCDGTG), 199–206 (CPRCEGEG), and 213–220 (CDDCGGEG). The span at 362–376 (AHDNFQPRPPEEDTQ) shows a compositional bias: basic and acidic residues. A disordered region spans residues 362–388 (AHDNFQPRPPEEDTQKSFFRRVSDVFS).

It belongs to the DnaJ family. Homodimer. Requires Zn(2+) as cofactor.

It localises to the cytoplasm. Participates actively in the response to hyperosmotic and heat shock by preventing the aggregation of stress-denatured proteins and by disaggregating proteins, also in an autonomous, DnaK-independent fashion. Unfolded proteins bind initially to DnaJ; upon interaction with the DnaJ-bound protein, DnaK hydrolyzes its bound ATP, resulting in the formation of a stable complex. GrpE releases ADP from DnaK; ATP binding to DnaK triggers the release of the substrate protein, thus completing the reaction cycle. Several rounds of ATP-dependent interactions between DnaJ, DnaK and GrpE are required for fully efficient folding. Also involved, together with DnaK and GrpE, in the DNA replication of plasmids through activation of initiation proteins. In Salinibacter ruber (strain DSM 13855 / M31), this protein is Chaperone protein DnaJ.